An 878-amino-acid polypeptide reads, in one-letter code: Indoleacetate decarboxylase (878 aa).

Positions aspartate 42–leucine 750 constitute a PFL domain. The Cysteine radical intermediate role is filled by cysteine 500. Glutamate 502 serves as the catalytic Proton acceptor. The region spanning glycine 758–leucine 878 is the Glycine radical domain. Glycine 853 bears the Glycine radical mark.

Belongs to the glycyl radical enzyme (GRE) family. In terms of assembly, homodimer (predominantly) and monomer. In terms of processing, requires the activating protein OsIADAE to generate the key active site glycyl radical on Gly-853 that is involved in catalysis.

It catalyses the reaction (indol-3-yl)acetate + H(+) = skatole + CO2. It functions in the pathway amino-acid degradation. In terms of biological role, glycyl radical enzyme that catalyzes the terminal step of tryptophan fermentation, the decarboxylation of indoleacetate to form skatole, a malodorous compound that contributes to the characteristic smell of animal feces. No activity is detected with phenylacetate or p-hydroxyphenylacetate as substrates, indicating high substrate specificity. The protein is Indoleacetate decarboxylase of Tractidigestivibacter scatoligenes (Olsenella scatoligenes).